A 31-amino-acid chain; its full sequence is Cyclotide psybry A (31 aa).

The segment at residues 1–31 (GFNPCGETCIWFPTCHAPGCTCSIANICVRN) is a cross-link (cyclopeptide (Gly-Asn)). Disulfide bonds link C5–C20, C9–C22, and C15–C28.

Post-translationally, this is a cyclic peptide.

Probably participates in a plant defense mechanism. This Psychotria brachyceras protein is Cyclotide psybry A.